Reading from the N-terminus, the 369-residue chain is Protein-glutamate methylesterase/protein-glutamine glutaminase (369 aa).

The region spanning Lys-4–Leu-121 is the Response regulatory domain. Asp-55 carries the post-translational modification 4-aspartylphosphate. Residues Ala-146–Thr-171 show a composition bias toward low complexity. The tract at residues Ala-146 to Ala-175 is disordered. The region spanning Ser-176–Ala-369 is the CheB-type methylesterase domain. Residues Ser-188, His-215, and Asp-311 contribute to the active site.

This sequence belongs to the CheB family. In terms of processing, phosphorylated by CheA. Phosphorylation of the N-terminal regulatory domain activates the methylesterase activity.

The protein resides in the cytoplasm. It catalyses the reaction [protein]-L-glutamate 5-O-methyl ester + H2O = L-glutamyl-[protein] + methanol + H(+). It carries out the reaction L-glutaminyl-[protein] + H2O = L-glutamyl-[protein] + NH4(+). Its function is as follows. Involved in chemotaxis. Part of a chemotaxis signal transduction system that modulates chemotaxis in response to various stimuli. Catalyzes the demethylation of specific methylglutamate residues introduced into the chemoreceptors (methyl-accepting chemotaxis proteins or MCP) by CheR. Also mediates the irreversible deamidation of specific glutamine residues to glutamic acid. This is Protein-glutamate methylesterase/protein-glutamine glutaminase from Vibrio parahaemolyticus serotype O3:K6 (strain RIMD 2210633).